Reading from the N-terminus, the 127-residue chain is uncharacterized protein (127 aa).

The interval 69–94 (GDGGSVPEKGKHGILGAQGQEHPGLN) is disordered.

This is an uncharacterized protein from Homo sapiens (Human).